The sequence spans 279 residues: NAD kinase (279 aa).

The active-site Proton acceptor is D63. Residues 63 to 64 (DG), R68, 133 to 134 (NE), and D163 contribute to the NAD(+) site.

Belongs to the NAD kinase family. The cofactor is a divalent metal cation.

It localises to the cytoplasm. The enzyme catalyses NAD(+) + ATP = ADP + NADP(+) + H(+). Involved in the regulation of the intracellular balance of NAD and NADP, and is a key enzyme in the biosynthesis of NADP. Catalyzes specifically the phosphorylation on 2'-hydroxyl of the adenosine moiety of NAD to yield NADP. This Protochlamydia amoebophila (strain UWE25) protein is NAD kinase.